A 349-amino-acid polypeptide reads, in one-letter code: Anthranilate phosphoribosyltransferase (349 aa).

5-phospho-alpha-D-ribose 1-diphosphate is bound by residues glycine 82, 85-86 (GD), 92-95 (NVST), 110-118 (KHGNRAVSG), and serine 122. Residue glycine 82 participates in anthranilate binding. Serine 94 contacts Mg(2+). Residue asparagine 113 participates in anthranilate binding. Residue arginine 168 participates in anthranilate binding. Aspartate 227 and glutamate 228 together coordinate Mg(2+).

Belongs to the anthranilate phosphoribosyltransferase family. Homodimer. It depends on Mg(2+) as a cofactor.

The enzyme catalyses N-(5-phospho-beta-D-ribosyl)anthranilate + diphosphate = 5-phospho-alpha-D-ribose 1-diphosphate + anthranilate. Its pathway is amino-acid biosynthesis; L-tryptophan biosynthesis; L-tryptophan from chorismate: step 2/5. Its function is as follows. Catalyzes the transfer of the phosphoribosyl group of 5-phosphorylribose-1-pyrophosphate (PRPP) to anthranilate to yield N-(5'-phosphoribosyl)-anthranilate (PRA). In Pseudomonas putida (Arthrobacter siderocapsulatus), this protein is Anthranilate phosphoribosyltransferase.